Reading from the N-terminus, the 216-residue chain is Large ribosomal subunit protein uL1A (216 aa).

Phosphoserine is present on residues Ser-85 and Ser-128.

This sequence belongs to the universal ribosomal protein uL1 family. Component of the large ribosomal subunit (LSU). Mature yeast ribosomes consist of a small (40S) and a large (60S) subunit. The 40S small subunit contains 1 molecule of ribosomal RNA (18S rRNA) and at least 33 different proteins. The large 60S subunit contains 3 rRNA molecules (25S, 5.8S and 5S rRNA) and at least 46 different proteins. uL1 forms part of the L1 stalk.

It localises to the cytoplasm. Its function is as follows. Component of the ribosome, a large ribonucleoprotein complex responsible for the synthesis of proteins in the cell. The small ribosomal subunit (SSU) binds messenger RNAs (mRNAs) and translates the encoded message by selecting cognate aminoacyl-transfer RNA (tRNA) molecules. The large subunit (LSU) contains the ribosomal catalytic site termed the peptidyl transferase center (PTC), which catalyzes the formation of peptide bonds, thereby polymerizing the amino acids delivered by tRNAs into a polypeptide chain. The nascent polypeptides leave the ribosome through a tunnel in the LSU and interact with protein factors that function in enzymatic processing, targeting, and the membrane insertion of nascent chains at the exit of the ribosomal tunnel. uL1 forms part of the L1 stalk, a mobile element that plays a role in evacuating the exit-site tRNA. The polypeptide is Large ribosomal subunit protein uL1A (rpl102) (Schizosaccharomyces pombe (strain 972 / ATCC 24843) (Fission yeast)).